A 253-amino-acid chain; its full sequence is Tryptophan synthase alpha chain (253 aa).

Catalysis depends on proton acceptor residues Glu-47 and Asp-58.

It belongs to the TrpA family. As to quaternary structure, tetramer of two alpha and two beta chains.

The enzyme catalyses (1S,2R)-1-C-(indol-3-yl)glycerol 3-phosphate + L-serine = D-glyceraldehyde 3-phosphate + L-tryptophan + H2O. It functions in the pathway amino-acid biosynthesis; L-tryptophan biosynthesis; L-tryptophan from chorismate: step 5/5. In terms of biological role, the alpha subunit is responsible for the aldol cleavage of indoleglycerol phosphate to indole and glyceraldehyde 3-phosphate. In Syntrophotalea carbinolica (strain DSM 2380 / NBRC 103641 / GraBd1) (Pelobacter carbinolicus), this protein is Tryptophan synthase alpha chain.